Consider the following 157-residue polypeptide: Protein-export protein SecB (157 aa).

Belongs to the SecB family. As to quaternary structure, homotetramer, a dimer of dimers. One homotetramer interacts with 1 SecA dimer.

Its subcellular location is the cytoplasm. In terms of biological role, one of the proteins required for the normal export of preproteins out of the cell cytoplasm. It is a molecular chaperone that binds to a subset of precursor proteins, maintaining them in a translocation-competent state. It also specifically binds to its receptor SecA. This Methylobacillus flagellatus (strain ATCC 51484 / DSM 6875 / VKM B-1610 / KT) protein is Protein-export protein SecB.